Here is a 496-residue protein sequence, read N- to C-terminus: Cobyric acid synthase (496 aa).

Residues 258-427 (TLTVAAIRLP…WHGLLDNDAL (170 aa)) form the GATase cobBQ-type domain. C339 (nucleophile) is an active-site residue. H419 is a catalytic residue.

This sequence belongs to the CobB/CobQ family. CobQ subfamily.

It functions in the pathway cofactor biosynthesis; adenosylcobalamin biosynthesis. Catalyzes amidations at positions B, D, E, and G on adenosylcobyrinic A,C-diamide. NH(2) groups are provided by glutamine, and one molecule of ATP is hydrogenolyzed for each amidation. The chain is Cobyric acid synthase from Mycolicibacterium smegmatis (strain ATCC 700084 / mc(2)155) (Mycobacterium smegmatis).